The following is a 531-amino-acid chain: Sop-2-related protein 3 (531 aa).

As to expression, expressed ubiquitously.

The protein resides in the cytoplasm. Its subcellular location is the nucleus. In terms of biological role, probably acts synergistically with sop-2 to maintain the transcriptionally repressive state of homeotic genes in order to regulate various neurogenic identities. Specification of some neuronal identities also involves expression of non-Hox genes. Specifies dopaminergic and serotonergic neuronal cell fate, and regulates neurotransmitter choice and axon pathfinding. The sequence is that of Sop-2-related protein 3 (sor-3) from Caenorhabditis elegans.